Consider the following 543-residue polypeptide: MARYIFITGGVVSSLGKGLASAALGALLQARGYKVRLRKLDPYLNLDPGTMSPYQHGEVFVTDDGAETDLDLGHYERFTGRPATKADNITTGRIYQDILTKERRGDYLGATIQVVPHVTNAIKDFVLSGNDEYDFVLVEIGGTVGDIEGLPFFEAIRQLKNELPRDHAIYIHLTLLPYIPSAGELKTKPTQHSVKELRSIGIQPDILLCRTDREIPKEERRKLGLFCNVRESAVIEARDVDNIYAVPEAYHAAGLDDEVLAAFGIEPRVPPALASWHTINERVRNPEGDVTIAIVGKYTGMKDAYKSLIEALSHGGIANKVRVKLDWIESEVFENEDPAPFLEHVNGILVPGGFGQRGAEGKIRAAQFARERDVPYFGICFGMQMAVIEAARNLVGITEANSTEFGPTKEPLVGLMTEWLRGNELERRSQSGDLGGTMRLGAYPAMLKRGSRVSEVYGGATEISERHRHRYEVNTAYKDRLEQHGLKFSGLSPDGVLPEIVEYADHPWFIGVQFHPELKSRPFEPHPLFASFIQAAVVQSRLV.

The amidoligase domain stretch occupies residues 1-265; sequence MARYIFITGG…DDEVLAAFGI (265 aa). Ser-13 lines the CTP pocket. Ser-13 lines the UTP pocket. 14 to 19 contributes to the ATP binding site; sequence SLGKGL. Tyr-54 serves as a coordination point for L-glutamine. Asp-71 provides a ligand contact to ATP. Positions 71 and 139 each coordinate Mg(2+). CTP is bound by residues 146–148, 186–191, and Lys-222; these read DIE and KTKPTQ. UTP-binding positions include 186 to 191 and Lys-222; that span reads KTKPTQ. ATP is bound at residue 238–240; that stretch reads RDV. Residues 291-542 enclose the Glutamine amidotransferase type-1 domain; the sequence is TIAIVGKYTG…IQAAVVQSRL (252 aa). Gly-353 lines the L-glutamine pocket. Cys-380 (nucleophile; for glutamine hydrolysis) is an active-site residue. L-glutamine is bound by residues 381-384, Glu-404, and Arg-470; that span reads FGMQ. Active-site residues include His-515 and Glu-517.

This sequence belongs to the CTP synthase family. Homotetramer.

It catalyses the reaction UTP + L-glutamine + ATP + H2O = CTP + L-glutamate + ADP + phosphate + 2 H(+). It carries out the reaction L-glutamine + H2O = L-glutamate + NH4(+). The enzyme catalyses UTP + NH4(+) + ATP = CTP + ADP + phosphate + 2 H(+). The protein operates within pyrimidine metabolism; CTP biosynthesis via de novo pathway; CTP from UDP: step 2/2. Its activity is regulated as follows. Allosterically activated by GTP, when glutamine is the substrate; GTP has no effect on the reaction when ammonia is the substrate. The allosteric effector GTP functions by stabilizing the protein conformation that binds the tetrahedral intermediate(s) formed during glutamine hydrolysis. Inhibited by the product CTP, via allosteric rather than competitive inhibition. In terms of biological role, catalyzes the ATP-dependent amination of UTP to CTP with either L-glutamine or ammonia as the source of nitrogen. Regulates intracellular CTP levels through interactions with the four ribonucleotide triphosphates. This is CTP synthase from Bradyrhizobium sp. (strain BTAi1 / ATCC BAA-1182).